Reading from the N-terminus, the 75-residue chain is U9-theraphotoxin-Cg1a (75 aa).

An N-terminal signal peptide occupies residues 1 to 21 (MKTLVLFIIFGLAALFLLSSA). The propeptide occupies 22-29 (NELEETER). 3 disulfide bridges follow: Cys-31-Cys-46, Cys-38-Cys-51, and Cys-45-Cys-58.

Belongs to the neurotoxin 10 (Hwtx-1) family. 43 (Jztx-49) subfamily. In terms of tissue distribution, expressed by the venom gland.

It localises to the secreted. Its function is as follows. Probable ion channel inhibitor. This chain is U9-theraphotoxin-Cg1a, found in Chilobrachys guangxiensis (Chinese earth tiger tarantula).